The chain runs to 172 residues: Adenine phosphoribosyltransferase (172 aa).

The protein belongs to the purine/pyrimidine phosphoribosyltransferase family. Homodimer.

Its subcellular location is the cytoplasm. It catalyses the reaction AMP + diphosphate = 5-phospho-alpha-D-ribose 1-diphosphate + adenine. It participates in purine metabolism; AMP biosynthesis via salvage pathway; AMP from adenine: step 1/1. Catalyzes a salvage reaction resulting in the formation of AMP, that is energically less costly than de novo synthesis. In Pelobacter propionicus (strain DSM 2379 / NBRC 103807 / OttBd1), this protein is Adenine phosphoribosyltransferase.